We begin with the raw amino-acid sequence, 1237 residues long: Glutamate receptor ionotropic, NMDA 2C (1237 aa).

The N-terminal stretch at 1–19 (MGGALGPALLLTSLLGAWA) is a signal peptide. Over 20 to 554 (RLGAGQGEQA…SAFLEPYSPA (535 aa)) the chain is Extracellular. N70 and N73 each carry an N-linked (GlcNAc...) asparagine glycan. C82 and C317 are oxidised to a cystine. 2 N-linked (GlcNAc...) asparagine glycosylation sites follow: N337 and N438. 2 cysteine pairs are disulfide-bonded: C426–C453 and C433–C454. Residues S509, T511, and R516 each contribute to the L-glutamate site. The N-linked (GlcNAc...) asparagine glycan is linked to N539. A helical transmembrane segment spans residues 555-575 (VWVMMFVMCLTVVAITVFMFE). Residues 576–601 (YFSPVSYNQNLTKGKKPGGPSFTIGK) lie on the Cytoplasmic side of the membrane. Residues 601 to 620 (KSVWLLWALVFNNSVPIENP) form a pore-forming region. The segment at residues 602 to 611 (SVWLLWALVF) is an intramembrane region (discontinuously helical). At 612 to 622 (NNSVPIENPRG) the chain is on the cytoplasmic side. The helical transmembrane segment at 623–644 (TTSKIMVLVWAFFAVIFLASYT) threads the bilayer. Residues 645 to 813 (ANLAAFMIQE…EVMSSKLDID (169 aa)) lie on the Extracellular side of the membrane. N685 is a glycosylation site (N-linked (GlcNAc...) asparagine). L-glutamate is bound by residues S687, T688, and D729. The cysteines at positions 743 and 798 are disulfide-linked. The helical transmembrane segment at 814-833 (NMAGVFYMLLVAMGLALLVF) threads the bilayer. Over 834 to 1237 (AWEHLVYWKL…RRVSSLESEV (404 aa)) the chain is Cytoplasmic. Residues S875, S881, and S912 each carry the phosphoserine modification. Over residues 907-925 (ADVSSSLDRATRTIENWGN) the composition is skewed to polar residues. The segment at 907-990 (ADVSSSLDRA…LPDVSRPSCR (84 aa)) is disordered. Residues 930 to 941 (PAPTASGPRSST) show a composition bias toward low complexity. The span at 968-982 (PQPPARPATCGPPLP) shows a compositional bias: pro residues. Residues 1235–1237 (SEV) carry the PDZ-binding motif.

The protein belongs to the glutamate-gated ion channel (TC 1.A.10.1) family. NR2C/GRIN2C subfamily. As to quaternary structure, heterotetramer. Forms heterotetrameric channels composed of two GluN1/zeta subunits (GRIN1), and two identical GluN2/epsilon subunits (GRIN2A, GRIN2B, GRIN2C or GRIN2D) or GluN3 subunits (GRIN3A or GRIN3B) (in vitro). In vivo, the subunit composition may depend on the expression levels of the different subunits. Interacts with PDZ domains of PATJ and DLG4. Interacts (via PDZ-binding motif) with SNX27 (via PDZ domain); the interaction is required for recycling to the plasma membrane when endocytosed and prevent degradation in lysosomes. As to expression, detected in cerebellum.

The protein resides in the cell membrane. It is found in the postsynaptic cell membrane. The enzyme catalyses Ca(2+)(in) = Ca(2+)(out). The catalysed reaction is Na(+)(in) = Na(+)(out). It catalyses the reaction K(+)(in) = K(+)(out). Its function is as follows. Component of N-methyl-D-aspartate (NMDA) receptors (NMDARs) that function as heterotetrameric, ligand-gated cation channels with high calcium permeability and voltage-dependent block by Mg(2+). Participates in synaptic plasticity for learning and memory formation by contributing to the slow phase of excitatory postsynaptic current and long-term synaptic potentiation. Channel activation requires binding of the neurotransmitter L-glutamate to the GluN2 subunit, glycine or D-serine binding to the GluN1 subunit, plus membrane depolarization to eliminate channel inhibition by Mg(2+). NMDARs mediate simultaneously the potasium efflux and the influx of calcium and sodium. Each GluN2 subunit confers differential attributes to channel properties, including activation, deactivation and desensitization kinetics, pH sensitivity, Ca2(+) permeability, and binding to allosteric modulators. The sequence is that of Glutamate receptor ionotropic, NMDA 2C from Rattus norvegicus (Rat).